The following is a 151-amino-acid chain: MADNDNEDVIMDDLVEEYVETEEENFVDSEEESEDKSEDKDEIVESPSICEGFVQASSQTLVIIPDNERITSNVLTTFEATRLVAVRAQQLAINGSTMLKKKYSSPIDIAKQELFNRKIPLLVMRCIKVTPEGQKIVEIWNPREMGIPLLD.

The span at 20-44 (ETEEENFVDSEEESEDKSEDKDEIV) shows a compositional bias: acidic residues. The segment at 20–46 (ETEEENFVDSEEESEDKSEDKDEIVES) is disordered.

It belongs to the archaeal RpoK/eukaryotic RPB6 RNA polymerase subunit family. As to quaternary structure, part of the viral DNA-directed RNA polymerase that consists of 8 polII-like subunits (RPB1, RPB2, RPB3, RPB5, RPB6, RPB7, RPB9, RPB10), a capping enzyme and a termination factor.

Its subcellular location is the host cytoplasm. The protein localises to the virion. In terms of biological role, component of the DNA-directed RNA polymerase (RNAP) that catalyzes the transcription in the cytoplasm of viral DNA into RNA using the four ribonucleoside triphosphates as substrates. The chain is DNA-directed RNA polymerase RPB6 homolog from African swine fever virus (isolate Tick/Malawi/Lil 20-1/1983) (ASFV).